A 140-amino-acid chain; its full sequence is Large ribosomal subunit protein uL11 (140 aa).

The protein belongs to the universal ribosomal protein uL11 family. Part of the ribosomal stalk of the 50S ribosomal subunit. Interacts with L10 and the large rRNA to form the base of the stalk. L10 forms an elongated spine to which L12 dimers bind in a sequential fashion forming a multimeric L10(L12)X complex. One or more lysine residues are methylated.

In terms of biological role, forms part of the ribosomal stalk which helps the ribosome interact with GTP-bound translation factors. The protein is Large ribosomal subunit protein uL11 of Staphylococcus epidermidis (strain ATCC 35984 / DSM 28319 / BCRC 17069 / CCUG 31568 / BM 3577 / RP62A).